We begin with the raw amino-acid sequence, 207 residues long: Proteasome subunit beta 2 (207 aa).

The propeptide at 1-13 is removed in mature form; by autocatalysis; that stretch reads METNNKLKILKTG. Residue Thr-14 is the Nucleophile of the active site.

This sequence belongs to the peptidase T1B family. The 20S proteasome core is composed of 14 alpha and 14 beta subunits that assemble into four stacked heptameric rings, resulting in a barrel-shaped structure. The two inner rings, each composed of seven catalytic beta subunits, are sandwiched by two outer rings, each composed of seven alpha subunits. The catalytic chamber with the active sites is on the inside of the barrel. Has a gated structure, the ends of the cylinder being occluded by the N-termini of the alpha-subunits. Is capped at one or both ends by the proteasome regulatory ATPase, PAN.

The protein resides in the cytoplasm. It catalyses the reaction Cleavage of peptide bonds with very broad specificity.. With respect to regulation, the formation of the proteasomal ATPase PAN-20S proteasome complex, via the docking of the C-termini of PAN into the intersubunit pockets in the alpha-rings, triggers opening of the gate for substrate entry. Interconversion between the open-gate and close-gate conformations leads to a dynamic regulation of the 20S proteasome proteolysis activity. In terms of biological role, component of the proteasome core, a large protease complex with broad specificity involved in protein degradation. The protein is Proteasome subunit beta 2 of Sulfurisphaera tokodaii (strain DSM 16993 / JCM 10545 / NBRC 100140 / 7) (Sulfolobus tokodaii).